A 191-amino-acid polypeptide reads, in one-letter code: Programmed cell death protein 6 (191 aa).

N-acetylalanine is present on Ala-2. EF-hand domains are found at residues 23 to 58 (PDQS…GTWT), 59 to 89 (PFNP…TGVW), 90 to 125 (KYIT…FGYR), 126 to 161 (LSDQ…LQRL), and 162 to 191 (TDIF…FSIV). Residues Asp-36, Asp-38, Ser-40, Val-42, and Glu-47 each coordinate Ca(2+). Asp-103, Asp-105, Ser-107, Met-109, and Glu-114 together coordinate Ca(2+). Residues Asp-169, Asp-171, Asp-173, and Trp-175 each contribute to the Mg(2+) site.

In terms of assembly, homodimer and heterodimer; heterodimerizes (via the EF-hand 5) with PEF1. Isoform 1 and isoform 2 self-associate; probably forming homodimers. Interacts with CPNE4 (via VWFA domain). Interacts with PDCD6IP; the interaction is calcium-dependent. Interacts with RBM22. Interacts with PLSCR4. Interacts with ANXA7 and TSG101. Interacts with DAPK1. Interacts with SEC31A; the interaction is calcium-dependent and promotes monoubiquitination of SEC31A. Interacts with ANXA11 (via N-terminus); the interaction is calcium-dependent. Interacts with PLSCR3 (via N-terminus); the interaction is calcium-dependent. Interacts with MCOLN1; the interaction is calcium-dependent. Interacts with KDR; the interaction is calcium-dependent. Interacts with HEBP2; the interaction is calcium-dependent. Interacts with TFG. Isoform 1: Interacts with SHISA5, leading to stabilize it. Isoform 2: Does not interact with SHISA5. Isoform 2: Does not interact with PDCD6IP, TSG101, ANXA7 and ANXA11.

It localises to the endoplasmic reticulum membrane. It is found in the cytoplasmic vesicle. The protein resides in the COPII-coated vesicle membrane. The protein localises to the cytoplasm. Its subcellular location is the nucleus. It localises to the endosome. Functionally, calcium sensor that plays a key role in processes such as endoplasmic reticulum (ER)-Golgi vesicular transport, endosomal biogenesis or membrane repair. Acts as an adapter that bridges unrelated proteins or stabilizes weak protein-protein complexes in response to calcium: calcium-binding triggers exposure of apolar surface, promoting interaction with different sets of proteins thanks to 3 different hydrophobic pockets, leading to translocation to membranes. Involved in ER-Golgi transport. Regulates ER-Golgi transport by promoting the association between PDCD6IP and TSG101, thereby bridging together the ESCRT-III and ESCRT-I complexes. Together with PEF1, acts as a calcium-dependent adapter for the BCR(KLHL12) complex, a complex involved in ER-Golgi transport by regulating the size of COPII coats. In response to cytosolic calcium increase, the heterodimer formed with PEF1 interacts with, and bridges together the BCR(KLHL12) complex and SEC31 (SEC31A or SEC31B), promoting monoubiquitination of SEC31 and subsequent collagen export, which is required for neural crest specification. Involved in the regulation of the distribution and function of MCOLN1 in the endosomal pathway. Promotes localization and polymerization of TFG at endoplasmic reticulum exit site. Required for T-cell receptor-, Fas-, and glucocorticoid-induced apoptosis. May mediate Ca(2+)-regulated signals along the death pathway: interaction with DAPK1 can accelerate apoptotic cell death by increasing caspase-3 activity. Its role in apoptosis may however be indirect, as suggested by knockout experiments. May inhibit KDR/VEGFR2-dependent angiogenesis; the function involves inhibition of VEGF-induced phosphorylation of the Akt signaling pathway. Its function is as follows. Has a lower Ca(2+) affinity than isoform 1. This Rattus norvegicus (Rat) protein is Programmed cell death protein 6.